The primary structure comprises 280 residues: 4-hydroxy-3-methylbut-2-enyl diphosphate reductase (280 aa).

Residue Cys-12 coordinates [4Fe-4S] cluster. Residues His-40 and His-72 each coordinate (2E)-4-hydroxy-3-methylbut-2-enyl diphosphate. Dimethylallyl diphosphate contacts are provided by His-40 and His-72. Isopentenyl diphosphate is bound by residues His-40 and His-72. Cys-94 is a binding site for [4Fe-4S] cluster. His-122 is a binding site for (2E)-4-hydroxy-3-methylbut-2-enyl diphosphate. His-122 lines the dimethylallyl diphosphate pocket. His-122 lines the isopentenyl diphosphate pocket. Glu-124 (proton donor) is an active-site residue. (2E)-4-hydroxy-3-methylbut-2-enyl diphosphate is bound at residue Thr-160. Cys-188 is a binding site for [4Fe-4S] cluster. (2E)-4-hydroxy-3-methylbut-2-enyl diphosphate-binding residues include Ser-216, Asn-218, and Ser-260. Dimethylallyl diphosphate contacts are provided by Ser-216, Asn-218, and Ser-260. 3 residues coordinate isopentenyl diphosphate: Ser-216, Asn-218, and Ser-260.

The protein belongs to the IspH family. [4Fe-4S] cluster serves as cofactor.

The catalysed reaction is isopentenyl diphosphate + 2 oxidized [2Fe-2S]-[ferredoxin] + H2O = (2E)-4-hydroxy-3-methylbut-2-enyl diphosphate + 2 reduced [2Fe-2S]-[ferredoxin] + 2 H(+). It catalyses the reaction dimethylallyl diphosphate + 2 oxidized [2Fe-2S]-[ferredoxin] + H2O = (2E)-4-hydroxy-3-methylbut-2-enyl diphosphate + 2 reduced [2Fe-2S]-[ferredoxin] + 2 H(+). Its pathway is isoprenoid biosynthesis; dimethylallyl diphosphate biosynthesis; dimethylallyl diphosphate from (2E)-4-hydroxy-3-methylbutenyl diphosphate: step 1/1. The protein operates within isoprenoid biosynthesis; isopentenyl diphosphate biosynthesis via DXP pathway; isopentenyl diphosphate from 1-deoxy-D-xylulose 5-phosphate: step 6/6. Its function is as follows. Catalyzes the conversion of 1-hydroxy-2-methyl-2-(E)-butenyl 4-diphosphate (HMBPP) into a mixture of isopentenyl diphosphate (IPP) and dimethylallyl diphosphate (DMAPP). Acts in the terminal step of the DOXP/MEP pathway for isoprenoid precursor biosynthesis. The protein is 4-hydroxy-3-methylbut-2-enyl diphosphate reductase of Pelobacter propionicus (strain DSM 2379 / NBRC 103807 / OttBd1).